The primary structure comprises 1057 residues: Atrial natriuretic peptide receptor 1 (1057 aa).

The signal sequence occupies residues 1 to 28 (MPGSRRVRPRLRALLLLPPLLLLRSGHA). Over 29–469 (SDLTVAVVLP…CNQDHFSTLE (441 aa)) the chain is Extracellular. N-linked (GlcNAc...) asparagine glycosylation is present at Asn41. Chloride contacts are provided by Ser81, Gly113, and Cys114. 2 cysteine pairs are disulfide-bonded: Cys88–Cys114 and Cys192–Cys241. N-linked (GlcNAc...) asparagine glycans are attached at residues Asn208, Asn334, Asn375, Asn382, and Asn423. A disulfide bridge links Cys451 with Cys460. Residues 470 to 490 (VLALVGSLSLVSFLIVSFFIY) form a helical membrane-spanning segment. The Cytoplasmic portion of the chain corresponds to 491–1057 (RKMQLEKELV…LGERGCSTRG (567 aa)). 2 positions are modified to phosphoserine: Ser515 and Ser525. Residues 524 to 801 (GSRLTLSGRG…QIRLALRKFN (278 aa)) form the Protein kinase domain. At Thr528 the chain carries Phosphothreonine. Phosphoserine is present on residues Ser530, Ser534, and Ser538. Thr541 carries the post-translational modification Phosphothreonine. Residues 872–1002 (TIYFSDIVGF…DTVNTASRME (131 aa)) form the Guanylate cyclase domain.

This sequence belongs to the adenylyl cyclase class-4/guanylyl cyclase family. Homodimer. Post-translationally, phosphorylation of the protein kinase-like domain is required for full activation by ANP.

The protein localises to the membrane. It catalyses the reaction GTP = 3',5'-cyclic GMP + diphosphate. Receptor for the atrial natriuretic peptide NPPA/ANP and the brain natriuretic peptide NPPB/BNP which are potent vasoactive hormones playing a key role in cardiovascular homeostasis. Plays an essential role in the regulation of endothelial cell senescence and vascular aging. Upon activation by ANP or BNP, stimulates the production of cyclic guanosine monophosphate (cGMP) that promotes vascular tone and volume homeostasis by activation of protein kinase cGMP-dependent 1/PRKG1 and subsequently PRKAA1, thereby controlling blood pressure and maintaining cardiovascular homeostasis. This is Atrial natriuretic peptide receptor 1 (Npr1) from Mus musculus (Mouse).